We begin with the raw amino-acid sequence, 134 residues long: Probable 4-amino-4-deoxy-L-arabinose-phosphoundecaprenol flippase subunit ArnF (134 aa).

The Cytoplasmic segment spans residues 1 to 5 (MNRRR). A helical transmembrane segment spans residues 6–26 (GILFALASVLLVSVAQLSMRW). The Periplasmic portion of the chain corresponds to 27–45 (SMTRLPRPDQWLSVPSVDS). The helical transmembrane segment at 46–66 (VALAVVLAAIFAYALSMLCWL) threads the bilayer. Over 67–77 (AALRDLPLGRA) the chain is Cytoplasmic. Residues 78–98 (YSLLSISYALVYLLAASLPLF) traverse the membrane as a helical segment. Residues 99–101 (NES) are Periplasmic-facing. The chain crosses the membrane as a helical span at residues 102 to 122 (FSFSKSLGVALVMLGVITINT). The Cytoplasmic segment spans residues 123–134 (RPARAPELRSSP).

It belongs to the ArnF family. Heterodimer of ArnE and ArnF.

It is found in the cell inner membrane. The protein operates within bacterial outer membrane biogenesis; lipopolysaccharide biosynthesis. In terms of biological role, translocates 4-amino-4-deoxy-L-arabinose-phosphoundecaprenol (alpha-L-Ara4N-phosphoundecaprenol) from the cytoplasmic to the periplasmic side of the inner membrane. In Pseudomonas fluorescens (strain Pf0-1), this protein is Probable 4-amino-4-deoxy-L-arabinose-phosphoundecaprenol flippase subunit ArnF.